Consider the following 459-residue polypeptide: Putrescine aminotransferase (459 aa).

Pyridoxal 5'-phosphate is bound by residues 150–151 (GT) and Gln274. Lys300 carries the post-translational modification N6-(pyridoxal phosphate)lysine. Pyridoxal 5'-phosphate is bound at residue Thr332.

The protein belongs to the class-III pyridoxal-phosphate-dependent aminotransferase family. Putrescine aminotransferase subfamily. Pyridoxal 5'-phosphate serves as cofactor.

The catalysed reaction is an alkane-alpha,omega-diamine + 2-oxoglutarate = an omega-aminoaldehyde + L-glutamate. It catalyses the reaction putrescine + 2-oxoglutarate = 1-pyrroline + L-glutamate + H2O. The enzyme catalyses cadaverine + 2-oxoglutarate = 5-aminopentanal + L-glutamate. It functions in the pathway amine and polyamine degradation; putrescine degradation; 4-aminobutanal from putrescine (transaminase route): step 1/1. Functionally, catalyzes the aminotransferase reaction from putrescine to 2-oxoglutarate, leading to glutamate and 4-aminobutanal, which spontaneously cyclizes to form 1-pyrroline. This is the first step in one of two pathways for putrescine degradation, where putrescine is converted into 4-aminobutanoate (gamma-aminobutyrate or GABA) via 4-aminobutanal. Also functions as a cadaverine transaminase in a a L-lysine degradation pathway to succinate that proceeds via cadaverine, glutarate and L-2-hydroxyglutarate. The polypeptide is Putrescine aminotransferase (Salmonella choleraesuis (strain SC-B67)).